The primary structure comprises 93 residues: Small ribosomal subunit protein uS19 (93 aa).

It belongs to the universal ribosomal protein uS19 family.

Its function is as follows. Protein S19 forms a complex with S13 that binds strongly to the 16S ribosomal RNA. This chain is Small ribosomal subunit protein uS19, found in Desulfitobacterium hafniense (strain Y51).